We begin with the raw amino-acid sequence, 105 residues long: Met repressor (105 aa).

It belongs to the MetJ family. Homodimer.

Its subcellular location is the cytoplasm. Its function is as follows. This regulatory protein, when combined with SAM (S-adenosylmethionine) represses the expression of the methionine regulon and of enzymes involved in SAM synthesis. In Pasteurella multocida (strain Pm70), this protein is Met repressor.